We begin with the raw amino-acid sequence, 230 residues long: MSRAELDKNPRDVASMFDGVARRYDLTNTVLSLGQDRYWRKATRSALGIGPGQKVLDLAAGTAVSTVELNKSGAWCVAADFSVGMLAAGAARRVPKVAGDATRLPFADDVFDAVTISFGLRNVVDTQAALREMARVTRPGGRLVVCEFSTPSNALFATVYKEYLMRALPRVARAVSSNPDAYVYLAESIRAWPDQAALADQIAGAGWAGVRWRNLTGGIVALHAAHRPPR.

S-adenosyl-L-methionine is bound by residues threonine 62, aspartate 80, 100-101 (DA), and serine 117.

The protein belongs to the class I-like SAM-binding methyltransferase superfamily. MenG/UbiE family.

The catalysed reaction is a 2-demethylmenaquinol + S-adenosyl-L-methionine = a menaquinol + S-adenosyl-L-homocysteine + H(+). It participates in quinol/quinone metabolism; menaquinone biosynthesis; menaquinol from 1,4-dihydroxy-2-naphthoate: step 2/2. Its function is as follows. Methyltransferase required for the conversion of demethylmenaquinol (DMKH2) to menaquinol (MKH2). This is Demethylmenaquinone methyltransferase from Mycolicibacterium paratuberculosis (strain ATCC BAA-968 / K-10) (Mycobacterium paratuberculosis).